The chain runs to 256 residues: MCLETIPTNNKTLALINQGYKVLAEYQMIEQKQLKGIYAIPSYSSGLLWFGVIFIHSGLYAESVFRFSILLPDQFPEESSLPTVIFQKDIFHPHICPVSHSLDLTPLLKEWKKDQHHIWHILKYIQAIFADPEGSVCSTQNGDPIPLTEVNNMEAMRLLANNRVDFAVRAKVSILWSCQHMFDEPPIKDPHYIIFERYCPEKHQAMMERLKSRSWYELSAPKTPKPSVCVARMESARQLIEDEEAQVVNAAGSSLN.

The region spanning 17–179 is the UBC core domain; sequence NQGYKVLAEY…AKVSILWSCQ (163 aa).

The protein belongs to the ubiquitin-conjugating enzyme family. FTS subfamily.

The sequence is that of Protein crossbronx-like from Drosophila virilis (Fruit fly).